Reading from the N-terminus, the 88-residue chain is Acyl-CoA-binding domain-containing protein 7 (88 aa).

The 86-residue stretch at 3–88 folds into the ACB domain; the sequence is LQADFDRAAE…AKELIEKYGI (86 aa). Residues R15, 30–34, K56, and Y75 contribute to the an acyl-CoA site; that span reads YGLYK.

Belongs to the ACBD7 family.

Its function is as follows. Binds medium- and long-chain acyl-CoA esters. The chain is Acyl-CoA-binding domain-containing protein 7 (ACBD7) from Homo sapiens (Human).